The chain runs to 398 residues: Histidinol-phosphate aminotransferase (398 aa).

Positions 1 to 10 (MTGQRATPQP) are enriched in polar residues. The disordered stretch occupies residues 1-30 (MTGQRATPQPTLDDLPLRDDLRGKSPYGAP). K234 is modified (N6-(pyridoxal phosphate)lysine).

Belongs to the class-II pyridoxal-phosphate-dependent aminotransferase family. Histidinol-phosphate aminotransferase subfamily. In terms of assembly, homodimer. The cofactor is pyridoxal 5'-phosphate.

The enzyme catalyses L-histidinol phosphate + 2-oxoglutarate = 3-(imidazol-4-yl)-2-oxopropyl phosphate + L-glutamate. Its pathway is amino-acid biosynthesis; L-histidine biosynthesis; L-histidine from 5-phospho-alpha-D-ribose 1-diphosphate: step 7/9. The protein is Histidinol-phosphate aminotransferase of Mycolicibacterium paratuberculosis (strain ATCC BAA-968 / K-10) (Mycobacterium paratuberculosis).